We begin with the raw amino-acid sequence, 106 residues long: ATP-dependent Clp protease adapter protein ClpS (106 aa).

The protein belongs to the ClpS family. As to quaternary structure, binds to the N-terminal domain of the chaperone ClpA.

In terms of biological role, involved in the modulation of the specificity of the ClpAP-mediated ATP-dependent protein degradation. The polypeptide is ATP-dependent Clp protease adapter protein ClpS (Escherichia coli O139:H28 (strain E24377A / ETEC)).